The sequence spans 88 residues: Alkene monooxygenase system, oxygenase component subunit gamma (88 aa).

It belongs to the TmoB/XamoB family. In terms of assembly, the alkene monooxygenase multicomponent enzyme system is composed of an electron transfer component and a monooxygenase component interacting with the effector protein XamoD. The electron transfer component is composed of a ferredoxin reductase (XamoF) and a ferredoxin (XamoC), and the monooxygenase component is formed by a heterohexamer (dimer of heterotrimers) of two alpha subunits (XamoA), two beta subunits (XamoE) and two gamma subunits (XamoB).

Its subcellular location is the cytoplasm. The enzyme catalyses propene + NADH + O2 + H(+) = 1,2-epoxypropane + NAD(+) + H2O. Inhibited by propyne. Its function is as follows. Component of the alkene monooxygenase multicomponent enzyme system which catalyzes the O2- and NADH-dependent epoxidation of short chain (C2 to C6) alkenes to their corresponding epoxides. Also able to catalyze the oxidation of a number of chlorinated alkenes, including trichloroethylene, cis- and trans-1,2-dichloroethylene, vinyl chloride, 1-chloropropylene, 1,3-dichloropropylene and 2,3-dichloropropylene. The chain is Alkene monooxygenase system, oxygenase component subunit gamma from Xanthobacter autotrophicus (strain ATCC BAA-1158 / Py2).